The following is a 172-amino-acid chain: Large ribosomal subunit protein uL10 (172 aa).

This sequence belongs to the universal ribosomal protein uL10 family. As to quaternary structure, part of the ribosomal stalk of the 50S ribosomal subunit. The N-terminus interacts with L11 and the large rRNA to form the base of the stalk. The C-terminus forms an elongated spine to which L12 dimers bind in a sequential fashion forming a multimeric L10(L12)X complex.

Functionally, forms part of the ribosomal stalk, playing a central role in the interaction of the ribosome with GTP-bound translation factors. The chain is Large ribosomal subunit protein uL10 from Pelodictyon phaeoclathratiforme (strain DSM 5477 / BU-1).